The primary structure comprises 419 residues: Dimethylamine methyltransferase MtbB2 (419 aa).

Position 308 (O308) is a non-standard amino acid, pyrrolysine.

Belongs to the dimethylamine methyltransferase family.

The catalysed reaction is Co(I)-[dimethylamine-specific corrinoid protein] + dimethylamine + H(+) = methyl-Co(III)-[dimethylamine-specific corrinoid protein] + methylamine. The protein operates within one-carbon metabolism; methanogenesis from dimethylamine. Catalyzes the transfer of a methyl group from dimethylamine to the corrinoid cofactor of MtbC. No evidence for expression of this protein has been found after growth under presumably inducing conditions. The protein is Dimethylamine methyltransferase MtbB2 of Methanosarcina barkeri.